Here is a 194-residue protein sequence, read N- to C-terminus: MKNLFYSFVSGSEYLVLVALDTEGCVYYASAGELNSQASMVELMEKDFLKAPEFRVNSLNSASSSLVNKKSEVKIKDTLEKFKSLIDFENKDEKIPYKVVFGTPLQRKVWDYLVNELPVGSISTYQKIAQHLGMPNSSRAIGNCVGANRIAVVIPCHRVIGSSGKITGYRYGTNIKKTILQNELGSKYGSTITN.

The DNA site is built by tyrosine 125 and arginine 139. Cysteine 156 (nucleophile; methyl group acceptor) is an active-site residue. Serine 162 provides a ligand contact to DNA.

It belongs to the MGMT family.

Its subcellular location is the nucleus. It catalyses the reaction a 6-O-methyl-2'-deoxyguanosine in DNA + L-cysteinyl-[protein] = S-methyl-L-cysteinyl-[protein] + a 2'-deoxyguanosine in DNA. It carries out the reaction a 4-O-methyl-thymidine in DNA + L-cysteinyl-[protein] = a thymidine in DNA + S-methyl-L-cysteinyl-[protein]. Involved in the cellular defense against the biological effects of O6-methylguanine (O6-MeG) and O4-methylthymine (O4-MeT) in DNA. Repairs the methylated nucleobase in DNA by stoichiometrically transferring the methyl group to a cysteine residue in the enzyme. This is a suicide reaction: the enzyme is irreversibly inactivated. This Scheffersomyces stipitis (strain ATCC 58785 / CBS 6054 / NBRC 10063 / NRRL Y-11545) (Yeast) protein is Methylated-DNA--protein-cysteine methyltransferase (MGT1).